Reading from the N-terminus, the 329-residue chain is Arylacetonitrilase (329 aa).

The region spanning 6–279 (VRVAVTQAEP…EGIVYANLDM (274 aa)) is the CN hydrolase domain. Catalysis depends on E46, which acts as the Proton acceptor. The active site involves K126. The active-site Nucleophile is C161.

Belongs to the carbon-nitrogen hydrolase superfamily. Nitrilase family.

The enzyme catalyses a nitrile + 2 H2O = a carboxylate + NH4(+). The catalysed reaction is 4-chlorophenylacetonitrile + 2 H2O = 4-chlorophenylacetate + NH4(+). In terms of biological role, nitrilase that hydrolyzes preferentially phenylacetonitrile and heteroaromatic nitriles, but has significantly lower activity for (R,S)-mandelonitrile. Also acts on dinitriles like phenylenediacetonitriles (PDAs) 1,2-PDA, 1,3-PDA, and 1,4-PDA, and cyanophenyl acetonitriles (CPAs) 2-CPA and 4-CPA. This chain is Arylacetonitrilase, found in Hypocrea virens (strain Gv29-8 / FGSC 10586) (Gliocladium virens).